The sequence spans 1894 residues: Plexin-A4 (1894 aa).

The signal sequence occupies residues Met1–Ser23. Positions Thr24 to Val507 constitute a Sema domain. The Extracellular portion of the chain corresponds to Thr24–Pro1237. 10 disulfides stabilise this stretch: Cys95/Cys104, Cys130/Cys138, Cys284/Cys405, Cys300/Cys356, Cys374/Cys393, Cys510/Cys527, Cys516/Cys558, Cys519/Cys536, Cys530/Cys542, and Cys593/Cys612. A PSI 1 domain is found at Ser509–Val559. N-linked (GlcNAc...) asparagine glycosylation occurs at Asn655. 2 consecutive PSI domains span residues Asn655 to Pro702 and Lys803 to Thr856. IPT/TIG domains are found at residues Pro858–Met952, Leu954–Val1037, Pro1040–Tyr1139, and Pro1142–Pro1230. N-linked (GlcNAc...) asparagine glycans are attached at residues Asn1007, Asn1132, and Asn1180. Residues Ala1238–Ile1258 form a helical membrane-spanning segment. Residues Ala1259 to Ser1894 lie on the Cytoplasmic side of the membrane. Lys1350 bears the N6-acetyllysine mark.

Belongs to the plexin family. As to quaternary structure, interacts with NRP1 and NRP2.

The protein localises to the cell membrane. In terms of biological role, coreceptor for SEMA3A. Necessary for signaling by class 3 semaphorins and subsequent remodeling of the cytoskeleton. Plays a role in axon guidance in the developing nervous system. Class 3 semaphorins bind to a complex composed of a neuropilin and a plexin. The plexin modulates the affinity of the complex for specific semaphorins, and its cytoplasmic domain is required for the activation of down-stream signaling events in the cytoplasm. The sequence is that of Plexin-A4 (PLXNA4) from Homo sapiens (Human).